The sequence spans 121 residues: Basic phospholipase A2 caudoxin (121 aa).

Intrachain disulfides connect C25/C114, C27/C43, C42/C94, C48/C121, C49/C87, C56/C80, and C74/C85. Ca(2+) contacts are provided by Y26, G28, and G30. H46 is an active-site residue. D47 serves as a coordination point for Ca(2+). D88 is a catalytic residue.

It belongs to the phospholipase A2 family. Group II subfamily. D49 sub-subfamily. As to quaternary structure, monomer. The cofactor is Ca(2+). In terms of tissue distribution, expressed by the venom gland.

It is found in the secreted. The catalysed reaction is a 1,2-diacyl-sn-glycero-3-phosphocholine + H2O = a 1-acyl-sn-glycero-3-phosphocholine + a fatty acid + H(+). Its function is as follows. Snake venom phospholipase A2 (PLA2) that shows anticoagulant activity and presynaptic neurotoxicity. Acts as an anticoagulant toxin by inhibiting prothrombinase complex formation. Shows about 50% of the prothrombinase complex inhibition compared to CM-IV of N.nigricollis venom. Acts as a neurotoxin by inhibiting neuromuscular transmission by blocking acetylcholine release from the nerve termini. PLA2 catalyzes the calcium-dependent hydrolysis of the 2-acyl groups in 3-sn-phosphoglycerides. In Bitis caudalis (Horned adder), this protein is Basic phospholipase A2 caudoxin.